A 315-amino-acid polypeptide reads, in one-letter code: Tyrosine recombinase XerC (315 aa).

A Core-binding (CB) domain is found at 1 to 103; that stretch reads MIASFYAFLD…AIKSFAKFCV (103 aa). Residues 124–306 form the Tyr recombinase domain; that stretch reads ELPSPLTYEQ…SMKLKKQIHD (183 aa). Active-site residues include Arg-164, Lys-188, His-258, Arg-261, and His-284. Catalysis depends on Tyr-293, which acts as the O-(3'-phospho-DNA)-tyrosine intermediate.

It belongs to the 'phage' integrase family. XerC subfamily. As to quaternary structure, forms a cyclic heterotetrameric complex composed of two molecules of XerC and two molecules of XerD.

It is found in the cytoplasm. Functionally, site-specific tyrosine recombinase, which acts by catalyzing the cutting and rejoining of the recombining DNA molecules. The XerC-XerD complex is essential to convert dimers of the bacterial chromosome into monomers to permit their segregation at cell division. It also contributes to the segregational stability of plasmids. This chain is Tyrosine recombinase XerC, found in Chlamydia muridarum (strain MoPn / Nigg).